The following is a 109-amino-acid chain: MMLITILLFLAAGLAEIGGGYLVWLWLREAKPAGYGIAGALILIVYGILPTFQSFPSFGRVYAAYGGVFIVLAVLWGWLVDRKTPDLYDWIGAFICLIGVCVILFAPRG.

4 helical membrane passes run 6-26, 32-52, 61-81, and 87-107; these read ILLF…VWLW, PAGY…LPTF, VYAA…WLVD, and LYDW…LFAP.

This sequence belongs to the UPF0060 family.

The protein localises to the cell membrane. This chain is UPF0060 membrane protein YfjF (yfjF), found in Bacillus subtilis (strain 168).